We begin with the raw amino-acid sequence, 310 residues long: Methionyl-tRNA formyltransferase (310 aa).

Ser111–Pro114 lines the (6S)-5,6,7,8-tetrahydrofolate pocket.

This sequence belongs to the Fmt family.

It carries out the reaction L-methionyl-tRNA(fMet) + (6R)-10-formyltetrahydrofolate = N-formyl-L-methionyl-tRNA(fMet) + (6S)-5,6,7,8-tetrahydrofolate + H(+). In terms of biological role, attaches a formyl group to the free amino group of methionyl-tRNA(fMet). The formyl group appears to play a dual role in the initiator identity of N-formylmethionyl-tRNA by promoting its recognition by IF2 and preventing the misappropriation of this tRNA by the elongation apparatus. This is Methionyl-tRNA formyltransferase from Afipia carboxidovorans (strain ATCC 49405 / DSM 1227 / KCTC 32145 / OM5) (Oligotropha carboxidovorans).